We begin with the raw amino-acid sequence, 161 residues long: MRKFLSKTHHHTNPLWRVYRLVKFSKVFKNVIIIEFSKFIPSMVLKRHIYKQLLNINIGNQSSIAYKVMLDIFYPELITIGSNSVIGYNVTILTHEALVDEFRYGPVTIGSNTLIGANATILPGITIGDNVKVAAGTVVSKDIPDNGFAYGNPMYIKMIRR.

The protein belongs to the transferase hexapeptide repeat family.

This chain is Putative acetyltransferase SAV0762, found in Staphylococcus aureus (strain Mu50 / ATCC 700699).